The chain runs to 150 residues: Allograft inflammatory factor 1-like (150 aa).

Ser-2 bears the N-acetylserine mark. Residue Ser-2 is modified to Phosphoserine. The 36-residue stretch at 47 to 82 (EKLAAFKEKYMEFDLNNEGEIDLMSLKRMMEKLGVP) folds into the EF-hand 1 domain. Ca(2+) contacts are provided by Asp-60, Asn-62, Glu-64, and Glu-66. The 35-residue stretch at 83–117 (KTHLEMKKMISEVTGGVSDTISYRDFVNMMLGKRS) folds into the EF-hand 2; degenerate domain. Positions 129–150 (KANESSPKPAGPPPERDIASLP) are disordered. Ser-134 is modified (phosphoserine).

As to quaternary structure, homodimer (Potential). Monomer.

It is found in the cytoplasm. The protein resides in the cytoskeleton. Its subcellular location is the cell projection. The protein localises to the ruffle membrane. In terms of biological role, actin-binding protein that promotes actin bundling. May neither bind calcium nor depend on calcium for function. This chain is Allograft inflammatory factor 1-like (Aif1l), found in Mus musculus (Mouse).